We begin with the raw amino-acid sequence, 635 residues long: Cationic amino acid transporter 4 (635 aa).

3 helical membrane passes run 42–62 (LTLLGVGGMVGSGLYVLTGTV), 66–86 (MAGPAVLLSFLVAAVASLLAA), and 113–133 (IWAFLIGWNVLLEYLIGGAAV). N-linked (GlcNAc...) asparagine glycosylation is found at asparagine 146, asparagine 151, and asparagine 195. Residues 197 to 217 (TFSAISLIVILFIIVLGFILA) traverse the membrane as a helical segment. An N-linked (GlcNAc...) asparagine glycan is attached at asparagine 221. 5 consecutive transmembrane segments (helical) span residues 229–249 (FAPFGFSGILAGTATCFYAFV), 270–290 (MAIAISLSLAAGAYILVSTVL), 318–338 (GFIVAVGSICAMNTVLLSNLF), 365–385 (QVPVVGILVFGVLMALLALLL), and 391–411 (VQFLSIGTLLAYTFVATSIIV). Serine 422 and serine 427 each carry phosphoserine. 4 helical membrane-spanning segments follow: residues 478–498 (VAWALGILVASAISLACVLVF), 508–528 (WGYVLLLVISGAVFLSSLLVL), 539–559 (TFQIPLVPLTPALSILLNTCL), and 567–587 (TWLRFIFWLLVGLVVYFGYGI).

It belongs to the amino acid-polyamine-organocation (APC) superfamily. Cationic amino acid transporter (CAT) (TC 2.A.3.3) family.

The protein localises to the membrane. Its function is as follows. Involved in the transport of the cationic amino acids (arginine, lysine and ornithine). This chain is Cationic amino acid transporter 4 (Slc7a4), found in Mus musculus (Mouse).